A 577-amino-acid chain; its full sequence is Pentatricopeptide repeat-containing protein At1g06143 (577 aa).

PPR repeat units follow at residues Asp-59 to Pro-89, Asn-90 to Pro-124, Ser-125 to Phe-155, His-158 to Ala-192, Trp-193 to Lys-219, Asn-220 to Lys-250, Asp-251 to Pro-285, Asp-286 to Leu-320, Asp-321 to Lys-351, Asn-352 to Pro-386, Asn-387 to Asp-417, and Asn-423 to Glu-453. The interval Ile-458 to Asp-534 is type E motif. The tract at residues Lys-535–Gly-565 is type E(+) motif.

It belongs to the PPR family. PCMP-E subfamily.

The polypeptide is Pentatricopeptide repeat-containing protein At1g06143 (EMB1444) (Arabidopsis thaliana (Mouse-ear cress)).